The sequence spans 706 residues: MRVRPKRSVITLMAIVVVMLILRNQFYSSRTRGHGQEPVISSSQKNLYDGWITPNFYRKGDPLELIVNKVESDLTQLPYAYYDLPFTCPPTMHKKPLHLSLNEIIRGDRKWESDYKLKFGEDNPCETLCARKTTKEGMQTLDKLVREGYVVQWLIDDELPAATTFISTTDHKKYYASGFPLGFIDPDTDKTYLHNHVMLVIRFHASDNDKNTIVGFEVYPRSVSDYHCPGASKNYEQYEIVIPEDENELTYLPFTYSVYWREEFEVDWNHRWDYFLNAGELSDEQSIQFHWMSLANSVGIVLSISFITLIIYVRVMYTDKSNSKSPKYMINIEGIETEDDLDDDKYGKYSVYTVAKDWIQNGRPNLFGLKVLILLVSFGVQFLFTIIGSLTISCSMNKLHNVRNSVLTMAILFFVLGAFMASFVGTRLSMVTKTKRTKANYLDDNRYLKDYKKFSPIFTILCGSSLPGIVMVSTFLLNSIVWAHDSTSALPFKTIVFFMSIYFIVCIPLSLFGGIVANNIPLPQYWLSGITKDESNSDGNGLFVPKSRAKFNPLVYCGIYLCGIFPLLVIYVEMQYVYKSLWLEKTTFYYFYGFLFLSIILLCVLTMEISIIGSYLLMRFCFEDKVVRNNWRWKCFEMGFSGGVYMELYSLYYIFAVLNIHGFSSILISICYSLIFNVMCSLGLGALSYLTASWFINKIYHQKVNL.

Residues 1–33 (MRVRPKRSVITLMAIVVVMLILRNQFYSSRTRG) form the signal peptide. At 34–290 (HGQEPVISSS…LSDEQSIQFH (257 aa)) the chain is on the lumenal side. The chain crosses the membrane as a helical span at residues 291 to 311 (WMSLANSVGIVLSISFITLII). Topologically, residues 312–371 (YVRVMYTDKSNSKSPKYMINIEGIETEDDLDDDKYGKYSVYTVAKDWIQNGRPNLFGLKV) are cytoplasmic. The chain crosses the membrane as a helical span at residues 372–392 (LILLVSFGVQFLFTIIGSLTI). Residues 393-405 (SCSMNKLHNVRNS) lie on the Lumenal side of the membrane. Residues 406–426 (VLTMAILFFVLGAFMASFVGT) form a helical membrane-spanning segment. Residues 427 to 456 (RLSMVTKTKRTKANYLDDNRYLKDYKKFSP) lie on the Cytoplasmic side of the membrane. A helical membrane pass occupies residues 457 to 477 (IFTILCGSSLPGIVMVSTFLL). Residues 478–494 (NSIVWAHDSTSALPFKT) are Lumenal-facing. The helical transmembrane segment at 495 to 515 (IVFFMSIYFIVCIPLSLFGGI) threads the bilayer. At 516–553 (VANNIPLPQYWLSGITKDESNSDGNGLFVPKSRAKFNP) the chain is on the cytoplasmic side. The helical transmembrane segment at 554–574 (LVYCGIYLCGIFPLLVIYVEM) threads the bilayer. Residues 575–592 (QYVYKSLWLEKTTFYYFY) lie on the Lumenal side of the membrane. A helical transmembrane segment spans residues 593 to 613 (GFLFLSIILLCVLTMEISIIG). Over 614 to 637 (SYLLMRFCFEDKVVRNNWRWKCFE) the chain is Cytoplasmic. Residues 638–658 (MGFSGGVYMELYSLYYIFAVL) traverse the membrane as a helical segment. At 659-665 (NIHGFSS) the chain is on the lumenal side. Residues 666 to 686 (ILISICYSLIFNVMCSLGLGA) form a helical membrane-spanning segment. The Cytoplasmic segment spans residues 687-706 (LSYLTASWFINKIYHQKVNL).

It belongs to the nonaspanin (TM9SF) (TC 9.A.2) family.

It is found in the golgi apparatus membrane. With EMP70 and TMN2, plays a critical role in the late stages of a nutrient-controlled pathway notably regulating FLO11 gene expression. Acts downstream of RAS2 and TOR. Essential for cell adhesion and filamentous growth. May play a role as effector of cellular copper homeostasis. The chain is Transmembrane 9 superfamily member 3 (TMN3) from Saccharomyces cerevisiae (strain ATCC 204508 / S288c) (Baker's yeast).